A 316-amino-acid polypeptide reads, in one-letter code: tRNA methyltransferase 10 homolog B (316 aa).

Residues 73–98 adopt a coiled-coil conformation; that stretch reads EKIVAAKKSKRKQEKERRKANRVENS. A disordered region spans residues 77-96; it reads AAKKSKRKQEKERRKANRVE. Positions 113-310 constitute an SAM-dependent MTase TRM10-type domain; that stretch reads IKERLLEAKH…KGVSSRKGYV (198 aa).

It belongs to the class IV-like SAM-binding methyltransferase superfamily. TRM10 family.

The catalysed reaction is guanosine(9) in tRNA + S-adenosyl-L-methionine = N(1)-methylguanosine(9) in tRNA + S-adenosyl-L-homocysteine + H(+). S-adenosyl-L-methionine-dependent guanine N(1)-methyltransferase that catalyzes the formation of N(1)-methylguanine at position 9 (m1G9) in tRNAs. Probably not able to catalyze formation of N(1)-methyladenine at position 9 (m1A9) in tRNAs. The polypeptide is tRNA methyltransferase 10 homolog B (TRMT10B) (Bos taurus (Bovine)).